Consider the following 429-residue polypeptide: ETS domain-containing protein Elk-1 (429 aa).

The ETS DNA-binding region spans 5 to 86; it reads VTLWQFLLQL…SGQKFVYKFV (82 aa). Disordered stretches follow at residues 119 to 146, 165 to 204, and 227 to 253; these read HAGPGDTATGKPGTPKGAGMTGQGGLAR, SLQPQPQPPIPPRPASVLPNTTPAGVPAPASGSRSTSPNP, and APNQKSEELSLDPSFGHPQPPEVKVEG. Positions 169–178 are enriched in pro residues; the sequence is QPQPPIPPRP. Residues Lys231, Lys250, and Lys255 each participate in a glycyl lysine isopeptide (Lys-Gly) (interchain with G-Cter in SUMO) cross-link. Residues 302–312 are compositionally biased toward polar residues; sequence STSTTEITQPQ. The disordered stretch occupies residues 302 to 354; the sequence is STSTTEITQPQKGRKPRDLELPLSPSLLGGQGPERTPGSGTSSGLQAPGPALT. Ser325 bears the Phosphoserine; by MAPK1 mark. Phosphothreonine; by MAPK1 occurs at positions 337, 354, 364, and 369. Residues 350–400 are sufficient for interaction with MAD2L2; it reads GPALTPSLLPTHTLTPVLLTPSSLPPSIHFWSTLSPIAPRSPAKLSFQFPS. O-linked (GlcNAc) threonine glycosylation occurs at Thr382. The residue at position 384 (Ser384) is a Phosphoserine; by MAPK1 and MAPK8. A Phosphoserine; by MAPK1 modification is found at Ser390. Thr418 carries the phosphothreonine; by MAPK1 modification. Ser423 is modified (phosphoserine; by MAPK1).

The protein belongs to the ETS family. In terms of assembly, interacts in its sumoylated form with PIAS2/PIASX which enhances its transcriptional activator activity. Interacts with MAD2L2; the interaction is direct and promotes phosphorylation by the kinases MAPK8 and/or MAPK9. Interacts with POU1F1. In terms of processing, sumoylation represses transcriptional activator activity as it results in recruitment of HDAC2 to target gene promoters which leads to decreased histone acetylation and reduced transactivator activity. It also regulates nuclear retention. On mitogenic stimulation, phosphorylated on C-terminal serine and threonine residues by MAPK1 but also MAPK8 and/or MAPK9. Phosphorylation leads to loss of sumoylation and restores transcriptional activator activity. Phosphorylated and activated by CaMK4, MAPK11, MAPK12 and MAPK14. Upon bFGF stimulus, phosphorylated by PAK1. Phosphorylated by PRP4K at Thr-418; phosphorylation activation ELK1 transcriptional activity. In terms of tissue distribution, predominantly expressed in the brain, and to a lesser extent in the heart, liver and muscle.

The protein localises to the nucleus. In terms of biological role, transcription factor that binds to purine-rich DNA sequences. Forms a ternary complex with SRF and the ETS and SRF motifs of the serum response element (SRE) on the promoter region of immediate early genes such as FOS and IER2. Induces target gene transcription upon JNK and MAPK-signaling pathways stimulation. The polypeptide is ETS domain-containing protein Elk-1 (Mus musculus (Mouse)).